The primary structure comprises 169 residues: Ureidoglycolate lyase (169 aa).

It belongs to the ureidoglycolate lyase family. Homodimer. Ni(2+) is required as a cofactor.

The catalysed reaction is (S)-ureidoglycolate = urea + glyoxylate. It functions in the pathway nitrogen metabolism; (S)-allantoin degradation. Functionally, catalyzes the catabolism of the allantoin degradation intermediate (S)-ureidoglycolate, generating urea and glyoxylate. Involved in the utilization of allantoin as nitrogen source. This is Ureidoglycolate lyase from Brucella ovis (strain ATCC 25840 / 63/290 / NCTC 10512).